We begin with the raw amino-acid sequence, 961 residues long: Glycine dehydrogenase (decarboxylating) (961 aa).

Lysine 709 is subject to N6-(pyridoxal phosphate)lysine.

It belongs to the GcvP family. In terms of assembly, the glycine cleavage system is composed of four proteins: P, T, L and H. Requires pyridoxal 5'-phosphate as cofactor.

The catalysed reaction is N(6)-[(R)-lipoyl]-L-lysyl-[glycine-cleavage complex H protein] + glycine + H(+) = N(6)-[(R)-S(8)-aminomethyldihydrolipoyl]-L-lysyl-[glycine-cleavage complex H protein] + CO2. In terms of biological role, the glycine cleavage system catalyzes the degradation of glycine. The P protein binds the alpha-amino group of glycine through its pyridoxal phosphate cofactor; CO(2) is released and the remaining methylamine moiety is then transferred to the lipoamide cofactor of the H protein. This chain is Glycine dehydrogenase (decarboxylating), found in Streptomyces avermitilis (strain ATCC 31267 / DSM 46492 / JCM 5070 / NBRC 14893 / NCIMB 12804 / NRRL 8165 / MA-4680).